The chain runs to 133 residues: Nodulation protein K (133 aa).

This Bradyrhizobium elkanii protein is Nodulation protein K (nodK).